A 440-amino-acid chain; its full sequence is Chromosome partition protein MukF (440 aa).

The interval 208–236 (LSETSGTLRELQDTLEAAGDKLQANLLRI) is leucine-zipper.

Belongs to the MukF family. Interacts, and probably forms a ternary complex, with MukE and MukB via its C-terminal region. The complex formation is stimulated by calcium or magnesium. It is required for an interaction between MukE and MukB.

It is found in the cytoplasm. The protein resides in the nucleoid. Its function is as follows. Involved in chromosome condensation, segregation and cell cycle progression. May participate in facilitating chromosome segregation by condensation DNA from both sides of a centrally located replisome during cell division. Not required for mini-F plasmid partitioning. Probably acts via its interaction with MukB and MukE. Overexpression results in anucleate cells. It has a calcium binding activity. The protein is Chromosome partition protein MukF of Escherichia coli O157:H7.